The primary structure comprises 1663 residues: Cortactin-binding protein 2 (1663 aa).

Disordered stretches follow at residues 1–23, 203–222, 359–440, 454–478, and 498–617; these read MATDGASCEPDLSRAPEDAAGAA, KKKTNELEEELSTEKRRSTE, QASH…LHPG, GNANDPDQNGNTTQSPPSRDVSPTS, and RFTS…KPSI. Positions 119-276 form a coiled coil; that stretch reads KKMQERMSAQ…EQLKRGSDSK (158 aa). Low complexity predominate over residues 386 to 396; the sequence is PSTGSTPDPTS. Arg-498 is subject to Asymmetric dimethylarginine. A compositionally biased stretch (polar residues) spans 583-593; that stretch reads TVASPPSSLPQ. ANK repeat units lie at residues 709 to 739, 743 to 772, 776 to 805, 809 to 838, 842 to 871, and 912 to 942; these read GRPTLLQQAAAQGNVTLLSMLLNEEGLDINY, DGHSALYSAAKNGHTDCVRLLLSAEAQVNA, NGFTPLCAAAAQGHFECVELLIAYDANINH, GGQTPLYLACKNGNKECVKLLLEAGTNRSV, DGWTPVHAAVDTGNVDSLKLLMYHRIPARG, and EGWTAAHIAASKGFKNCLEILCRHRGLEPER. The tract at residues 1446–1485 is disordered; the sequence is NKKKGESGAWRKVNTSPRRKSGRFSLPTWNKPDLSTEGMK. Ser-1524 bears the Phosphoserine mark. The segment at 1580 to 1663 is disordered; the sequence is SQKEVSPLSS…KNEHLEKPNK (84 aa). Residues 1582–1599 are compositionally biased toward polar residues; sequence KEVSPLSSHQTTECSNSK. Residues 1624 to 1638 show a composition bias toward low complexity; the sequence is SQNTKRSSSSSNTRQ. Basic and acidic residues predominate over residues 1645–1663; it reads SKEENWNLHKNEHLEKPNK.

As to quaternary structure, interacts with CTTN/cortactin SH3 domain. Interacts with STRN, STRN4/zinedin and MOB4/phocein; this interactions mediate the association with the STRIPAK core complex and may regulate dendritic spine distribution of the STRIPAK complex in hippocampal neurons. Activation of glutamate receptors weakens the interaction with STRN and STRN4.

It is found in the cytoplasm. The protein resides in the cell cortex. It localises to the cell projection. The protein localises to the dendritic spine. Functionally, regulates the dendritic spine distribution of CTTN/cortactin in hippocampal neurons, and thus controls dendritic spinogenesis and dendritic spine maintenance. Associates with the striatin-interacting phosphatase and kinase (STRIPAK) core complex to regulate dendritic spine distribution of the STRIPAK complex in hippocampal neurons. The polypeptide is Cortactin-binding protein 2 (CTTNBP2) (Pongo abelii (Sumatran orangutan)).